A 115-amino-acid polypeptide reads, in one-letter code: UPF0127 protein PH1112 (115 aa).

This sequence belongs to the UPF0127 family.

This Pyrococcus horikoshii (strain ATCC 700860 / DSM 12428 / JCM 9974 / NBRC 100139 / OT-3) protein is UPF0127 protein PH1112.